Here is a 115-residue protein sequence, read N- to C-terminus: Large ribosomal subunit protein bL19 (115 aa).

It belongs to the bacterial ribosomal protein bL19 family.

Functionally, this protein is located at the 30S-50S ribosomal subunit interface and may play a role in the structure and function of the aminoacyl-tRNA binding site. This is Large ribosomal subunit protein bL19 from Lachnospira eligens (strain ATCC 27750 / DSM 3376 / VPI C15-48 / C15-B4) (Eubacterium eligens).